Here is a 198-residue protein sequence, read N- to C-terminus: Protein FAM219B (198 aa).

Disordered stretches follow at residues 1–58 (MATA…KRGP) and 83–146 (RRKG…EQVN). Residues serine 14, serine 91, serine 125, and serine 127 each carry the phosphoserine modification. Polar residues predominate over residues 134 to 146 (RYSSGYSSAEQVN).

It belongs to the FAM219 family.

The polypeptide is Protein FAM219B (FAM219B) (Homo sapiens (Human)).